The chain runs to 221 residues: MEVLDRRDDEIRDSGNMDSIKSHYVTDSVSEERRSRELKDGDHPLRYKFSIWYTRRTPGVRNQSYEDNIKKMVEFSTVEGFWACYCHLARSSLLPSPTDLHFFKDGIRPLWEDGANCNGGKWIIRFSKVVSARFWEDLLLALVGDQLDDADNICGAVLSVRFNEDIISVWNRNASDHQAVMGLRDSIKRHLKLPHAYVMEYKPHDASLRDNSSYRNTWLRG.

This sequence belongs to the eukaryotic initiation factor 4E family. As to quaternary structure, EIF4F is a multi-subunit complex, the composition of which varies with external and internal environmental conditions. It is composed of at least EIF4A, EIF4E and EIF4G. EIF4E is also known to interact with other partners. In higher plants two isoforms of EIF4F have been identified, named isoform EIF4F and isoform EIF(iso)4F. Isoform EIF4F has subunits p220 and p26, whereas isoform EIF(iso)4F has subunits p82 and p28.

Recognizes and binds the 7-methylguanosine-containing mRNA cap during an early step in the initiation of protein synthesis and facilitates ribosome binding by inducing the unwinding of the mRNAs secondary structures. This is Eukaryotic translation initiation factor NCBP (NCBP) from Arabidopsis thaliana (Mouse-ear cress).